The sequence spans 479 residues: MSIPRMKSYFSLIAAVLMLGQVATAQAENLPDFTGLVEQASPAVVNISTRQKLPDRAIANQQMPDLEGLPPMLREFLERSMPPGSRPPGAGKGDRQRETQSLGSGFIISPDGYILTNNHVIDGADEILVRLSDRSELKAKLIGTDSRTDVAVLKIDGKDLPTAKLGNSNTLKVGEWVLAIGSPFGFDHSVTKGIVSAKGRSLPNDTYVPFIQTDVAINPGNSGGPLFNMAGEVVGINSQIFTRSGGFMGLSFAIPIDVAMDVANQLKASGKVSRGWLGVVIQEVNKDLAESFGLDKPAGALVAQVLEDGPAAKGGLQVGDVILSANGQPIIMSADLPHLIGNLKDGSKAELEVIRDGKRQKLTVTVGALPDEGQEMGDVAGTGAERSSNRLGVSVIELTAEQKKSLDLKGGVAIKEVTGGPASLIGLQPGDVITHLNNQAITSSKQFTEVAKSLPKDRSVSMRVLRQGRATFITFKLSE.

Residues 1–27 (MSIPRMKSYFSLIAAVLMLGQVATAQA) form the signal peptide. Residues 77–99 (LERSMPPGSRPPGAGKGDRQRET) form a disordered region. Active-site charge relay system residues include His-119, Asp-149, and Ser-222. Residues 220–222 (GNS) and 277–281 (LGVVI) each bind substrate. PDZ domains follow at residues 266–357 (LKAS…IRDG) and 363–468 (TVTV…LRQG).

The protein belongs to the peptidase S1C family.

The protein localises to the periplasm. It carries out the reaction Acts on substrates that are at least partially unfolded. The cleavage site P1 residue is normally between a pair of hydrophobic residues, such as Val-|-Val.. Functionally, might be efficient in the degradation of transiently denatured and unfolded proteins which accumulate in the periplasm following stress conditions. The polypeptide is Probable periplasmic serine endoprotease DegP-like (mucD) (Pseudomonas savastanoi pv. phaseolicola (strain 1448A / Race 6) (Pseudomonas syringae pv. phaseolicola (strain 1448A / Race 6))).